The following is a 484-amino-acid chain: Synaptic vesicle membrane protein VAT-1 homolog (484 aa).

Low complexity-rich tracts occupy residues 1–13 and 40–61; these read MSGE…QQNA and SAST…PAAE. Disordered stretches follow at residues 1-65 and 402-484; these read MSGE…KAPE and IGKI…KEEN. Positions 411–484 are enriched in basic and acidic residues; that stretch reads PMKEEEKKEE…KKEEVKKEEN (74 aa).

This sequence belongs to the zinc-containing alcohol dehydrogenase family. Quinone oxidoreductase subfamily.

The protein is Synaptic vesicle membrane protein VAT-1 homolog of Danio rerio (Zebrafish).